The primary structure comprises 358 residues: Magnesium-protoporphyrin IX monomethyl ester [oxidative] cyclase (358 aa).

Belongs to the AcsF family. Requires Fe cation as cofactor.

The catalysed reaction is Mg-protoporphyrin IX 13-monomethyl ester + 3 NADPH + 3 O2 + 2 H(+) = 3,8-divinyl protochlorophyllide a + 3 NADP(+) + 5 H2O. Its pathway is porphyrin-containing compound metabolism; chlorophyll biosynthesis (light-independent). Its function is as follows. Catalyzes the formation of the isocyclic ring in chlorophyll biosynthesis. Mediates the cyclase reaction, which results in the formation of divinylprotochlorophyllide (Pchlide) characteristic of all chlorophylls from magnesium-protoporphyrin IX 13-monomethyl ester (MgPMME). In Synechococcus elongatus (strain ATCC 33912 / PCC 7942 / FACHB-805) (Anacystis nidulans R2), this protein is Magnesium-protoporphyrin IX monomethyl ester [oxidative] cyclase.